The primary structure comprises 174 residues: Ribosome maturation factor RimM (174 aa).

In terms of domain architecture, PRC barrel spans 96–170; the sequence is PDEFYDHELE…YVVIDPPEGL (75 aa).

It belongs to the RimM family. Binds ribosomal protein uS19.

The protein resides in the cytoplasm. Its function is as follows. An accessory protein needed during the final step in the assembly of 30S ribosomal subunit, possibly for assembly of the head region. Essential for efficient processing of 16S rRNA. May be needed both before and after RbfA during the maturation of 16S rRNA. It has affinity for free ribosomal 30S subunits but not for 70S ribosomes. This is Ribosome maturation factor RimM from Nocardia farcinica (strain IFM 10152).